The following is a 513-amino-acid chain: ATP synthase subunit alpha (513 aa).

Gly171–Thr178 lines the ATP pocket.

This sequence belongs to the ATPase alpha/beta chains family. As to quaternary structure, F-type ATPases have 2 components, CF(1) - the catalytic core - and CF(0) - the membrane proton channel. CF(1) has five subunits: alpha(3), beta(3), gamma(1), delta(1), epsilon(1). CF(0) has three main subunits: a(1), b(2) and c(9-12). The alpha and beta chains form an alternating ring which encloses part of the gamma chain. CF(1) is attached to CF(0) by a central stalk formed by the gamma and epsilon chains, while a peripheral stalk is formed by the delta and b chains.

The protein resides in the cell membrane. The catalysed reaction is ATP + H2O + 4 H(+)(in) = ADP + phosphate + 5 H(+)(out). In terms of biological role, produces ATP from ADP in the presence of a proton gradient across the membrane. The alpha chain is a regulatory subunit. In Wolbachia pipientis subsp. Culex pipiens (strain wPip), this protein is ATP synthase subunit alpha.